Here is a 390-residue protein sequence, read N- to C-terminus: Transforming growth factor beta-1 proprotein (390 aa).

The N-terminal stretch at 1–29 is a signal peptide; sequence MPPSGLRLLPLLLPLPWLLVLTPGRPAAG. A straightjacket domain region spans residues 30–74; that stretch reads LSTCKTIDMELVKRKRIEAIRGQILSKLRLASPPSQGEVPPGPLP. Residues 75–271 are arm domain; sequence EAVLALYNST…ATPLERAQHL (197 aa). Asn82, Asn136, and Asn176 each carry an N-linked (GlcNAc...) asparagine glycan. Positions 226 to 252 are bowtie tail; it reads DSKDNVLHVEINGISPKRRGDLGTIHD. A Cell attachment site motif is present at residues 244-246; it reads RGD. 4 disulfide bridges follow: Cys285–Cys294, Cys293–Cys356, Cys322–Cys387, and Cys326–Cys389.

The protein belongs to the TGF-beta family. In terms of assembly, homodimer; disulfide-linked. Interacts with the serine proteases, HTRA1 and HTRA3: the interaction with either inhibits TGFB1-mediated signaling and the HTRA protease activity is required for this inhibition. May interact with THSD4; this interaction may lead to sequestration by FBN1 microfibril assembly and attenuation of TGFB signaling. Interacts with CD109, DPT and ASPN. Interacts with EFEMP2. Interacts with TSKU; the interaction contributes to regulation of the hair cycle. Interacts with TGFBR3. As to quaternary structure, homodimer; disulfide-linked. Interacts with transforming growth factor beta-1 (TGF-beta-1) chain; interaction is non-covalent and maintains TGF-beta-1 in a latent state; each latency-associated peptide (LAP) monomer interacts with TGF-beta-1 in the other monomer. Interacts with LTBP1; leading to regulation of TGF-beta-1 activation. Interacts with LRRC32/GARP; leading to regulation of TGF-beta-1 activation on the surface of activated regulatory T-cells (Tregs). Interacts with LRRC33/NRROS; leading to regulation of TGF-beta-1 activation in macrophages and microglia. Interacts (via cell attachment site) with integrins ITGAV and ITGB6 (ITGAV:ITGB6), leading to release of the active TGF-beta-1. Interacts with NREP; the interaction results in a decrease in TGFB1 autoinduction. Interacts with HSP90AB1; inhibits latent TGFB1 activation. Homodimer; disulfide-linked. Interacts with TGF-beta receptors (TGFBR1 and TGFBR2), leading to signal transduction. Post-translationally, transforming growth factor beta-1 proprotein: The precursor proprotein is cleaved in the Golgi apparatus by FURIN to form Transforming growth factor beta-1 (TGF-beta-1) and Latency-associated peptide (LAP) chains, which remain non-covalently linked, rendering TGF-beta-1 inactive. In terms of processing, N-glycosylated. Deglycosylation leads to activation of Transforming growth factor beta-1 (TGF-beta-1); mechanisms triggering deglycosylation-driven activation of TGF-beta-1 are however unclear. As to expression, abundant in the bone matrix. Expressed in cardiomyocytes.

Its subcellular location is the secreted. It localises to the extracellular space. The protein resides in the extracellular matrix. Transforming growth factor beta-1 proprotein: Precursor of the Latency-associated peptide (LAP) and Transforming growth factor beta-1 (TGF-beta-1) chains, which constitute the regulatory and active subunit of TGF-beta-1, respectively. Its function is as follows. Required to maintain the Transforming growth factor beta-1 (TGF-beta-1) chain in a latent state during storage in extracellular matrix. Associates non-covalently with TGF-beta-1 and regulates its activation via interaction with 'milieu molecules', such as LTBP1, LRRC32/GARP and LRRC33/NRROS, that control activation of TGF-beta-1. Interaction with LRRC33/NRROS regulates activation of TGF-beta-1 in macrophages and microglia. Interaction with LRRC32/GARP controls activation of TGF-beta-1 on the surface of activated regulatory T-cells (Tregs). Interaction with integrins (ITGAV:ITGB6 or ITGAV:ITGB8) results in distortion of the Latency-associated peptide chain and subsequent release of the active TGF-beta-1. Functionally, multifunctional protein that regulates the growth and differentiation of various cell types and is involved in various processes, such as normal development, immune function, microglia function and responses to neurodegeneration. Activation into mature form follows different steps: following cleavage of the proprotein in the Golgi apparatus, Latency-associated peptide (LAP) and Transforming growth factor beta-1 (TGF-beta-1) chains remain non-covalently linked rendering TGF-beta-1 inactive during storage in extracellular matrix. At the same time, LAP chain interacts with 'milieu molecules', such as LTBP1, LRRC32/GARP and LRRC33/NRROS that control activation of TGF-beta-1 and maintain it in a latent state during storage in extracellular milieus. TGF-beta-1 is released from LAP by integrins (ITGAV:ITGB6 or ITGAV:ITGB8): integrin-binding to LAP stabilizes an alternative conformation of the LAP bowtie tail and results in distortion of the LAP chain and subsequent release of the active TGF-beta-1. Once activated following release of LAP, TGF-beta-1 acts by binding to TGF-beta receptors (TGFBR1 and TGFBR2), which transduce signal. While expressed by many cells types, TGF-beta-1 only has a very localized range of action within cell environment thanks to fine regulation of its activation by Latency-associated peptide chain (LAP) and 'milieu molecules'. Plays an important role in bone remodeling: acts as a potent stimulator of osteoblastic bone formation, causing chemotaxis, proliferation and differentiation in committed osteoblasts. Can promote either T-helper 17 cells (Th17) or regulatory T-cells (Treg) lineage differentiation in a concentration-dependent manner. At high concentrations, leads to FOXP3-mediated suppression of RORC and down-regulation of IL-17 expression, favoring Treg cell development. At low concentrations in concert with IL-6 and IL-21, leads to expression of the IL-17 and IL-23 receptors, favoring differentiation to Th17 cells. Stimulates sustained production of collagen through the activation of CREB3L1 by regulated intramembrane proteolysis (RIP). Mediates SMAD2/3 activation by inducing its phosphorylation and subsequent translocation to the nucleus. Positively regulates odontoblastic differentiation in dental papilla cells, via promotion of IPO7-mediated translocation of phosphorylated SMAD2 to the nucleus and subsequent transcription of target genes. Can induce epithelial-to-mesenchymal transition (EMT) and cell migration in various cell types. The chain is Transforming growth factor beta-1 proprotein (Tgfb1) from Rattus norvegicus (Rat).